Consider the following 80-residue polypeptide: Cell division protein ZapB (80 aa).

A coiled-coil region spans residues 3–80 (LEILEQLEAK…GLLGKMEEVE (78 aa)). Positions 41–62 (LEQANNGRSEVEQEAQKARDEQ) are disordered. Residues 49-62 (SEVEQEAQKARDEQ) are compositionally biased toward basic and acidic residues.

It belongs to the ZapB family. In terms of assembly, homodimer. The ends of the coiled-coil dimer bind to each other, forming polymers. Interacts with FtsZ.

It localises to the cytoplasm. In terms of biological role, non-essential, abundant cell division factor that is required for proper Z-ring formation. It is recruited early to the divisome by direct interaction with FtsZ, stimulating Z-ring assembly and thereby promoting cell division earlier in the cell cycle. Its recruitment to the Z-ring requires functional FtsA or ZipA. The protein is Cell division protein ZapB of Aliivibrio salmonicida (strain LFI1238) (Vibrio salmonicida (strain LFI1238)).